We begin with the raw amino-acid sequence, 299 residues long: Oxygen-dependent coproporphyrinogen-III oxidase (299 aa).

Serine 92 lines the substrate pocket. A divalent metal cation-binding residues include histidine 96 and histidine 106. Histidine 106 (proton donor) is an active-site residue. 108–110 (NVR) lines the substrate pocket. Positions 145 and 175 each coordinate a divalent metal cation. Positions 240-275 (YVEFNLVWDRGTLFGLQTGGRTESILMSMPPLVRWE) are important for dimerization. Residue 258–260 (GGR) coordinates substrate.

This sequence belongs to the aerobic coproporphyrinogen-III oxidase family. As to quaternary structure, homodimer. A divalent metal cation serves as cofactor.

Its subcellular location is the cytoplasm. It catalyses the reaction coproporphyrinogen III + O2 + 2 H(+) = protoporphyrinogen IX + 2 CO2 + 2 H2O. It participates in porphyrin-containing compound metabolism; protoporphyrin-IX biosynthesis; protoporphyrinogen-IX from coproporphyrinogen-III (O2 route): step 1/1. Its function is as follows. Involved in the heme biosynthesis. Catalyzes the aerobic oxidative decarboxylation of propionate groups of rings A and B of coproporphyrinogen-III to yield the vinyl groups in protoporphyrinogen-IX. In Salmonella heidelberg (strain SL476), this protein is Oxygen-dependent coproporphyrinogen-III oxidase.